The chain runs to 314 residues: DNA-directed RNA polymerase subunit alpha (314 aa).

The alpha N-terminal domain (alpha-NTD) stretch occupies residues 1 to 228 (MIEFEKPNIH…DHLSIFVNLT (228 aa)). The interval 245–314 (KEKMLEMTIE…DLGLSLRKED (70 aa)) is alpha C-terminal domain (alpha-CTD).

This sequence belongs to the RNA polymerase alpha chain family. As to quaternary structure, homodimer. The RNAP catalytic core consists of 2 alpha, 1 beta, 1 beta' and 1 omega subunit. When a sigma factor is associated with the core the holoenzyme is formed, which can initiate transcription.

It catalyses the reaction RNA(n) + a ribonucleoside 5'-triphosphate = RNA(n+1) + diphosphate. DNA-dependent RNA polymerase catalyzes the transcription of DNA into RNA using the four ribonucleoside triphosphates as substrates. The protein is DNA-directed RNA polymerase subunit alpha of Lactiplantibacillus plantarum (strain ATCC BAA-793 / NCIMB 8826 / WCFS1) (Lactobacillus plantarum).